The following is a 183-amino-acid chain: ATP synthase subunit delta (183 aa).

This sequence belongs to the ATPase delta chain family. In terms of assembly, F-type ATPases have 2 components, F(1) - the catalytic core - and F(0) - the membrane proton channel. F(1) has five subunits: alpha(3), beta(3), gamma(1), delta(1), epsilon(1). CF(0) has four main subunits: a(1), b(1), b'(1) and c(10-14). The alpha and beta chains form an alternating ring which encloses part of the gamma chain. F(1) is attached to F(0) by a central stalk formed by the gamma and epsilon chains, while a peripheral stalk is formed by the delta, b and b' chains.

The protein localises to the cellular thylakoid membrane. F(1)F(0) ATP synthase produces ATP from ADP in the presence of a proton or sodium gradient. F-type ATPases consist of two structural domains, F(1) containing the extramembraneous catalytic core and F(0) containing the membrane proton channel, linked together by a central stalk and a peripheral stalk. During catalysis, ATP synthesis in the catalytic domain of F(1) is coupled via a rotary mechanism of the central stalk subunits to proton translocation. Its function is as follows. This protein is part of the stalk that links CF(0) to CF(1). It either transmits conformational changes from CF(0) to CF(1) or is implicated in proton conduction. The protein is ATP synthase subunit delta of Trichormus variabilis (strain ATCC 29413 / PCC 7937) (Anabaena variabilis).